We begin with the raw amino-acid sequence, 826 residues long: Prominin-1-A (826 aa).

3 helical membrane-spanning segments follow: residues 50-70 (YYEPGAIGILFNMMHAFLFVV), 106-126 (VVCAALGLLFTVLLPLVGLLF), and 153-173 (LLTTLLLTTTFIITAGVLCAY). N-linked (GlcNAc...) asparagine glycosylation is found at N178, N268, N286, N327, N388, and N404. 2 helical membrane passes run 439–459 (CMIVLILTFNFLGLLCGILGF) and 483–503 (VGFSFLFSWVLMGVITALFLA). N-linked (GlcNAc...) asparagine glycosylation is found at N576, N582, N617, and N693.

This sequence belongs to the prominin family.

The protein resides in the apical cell membrane. It is found in the cell projection. The protein localises to the microvillus membrane. Its subcellular location is the endoplasmic reticulum. It localises to the endoplasmic reticulum-Golgi intermediate compartment. May play a role in cell differentiation, proliferation and apoptosis. Binds cholesterol in cholesterol-containing plasma membrane microdomains and may play a role in the organization of the apical plasma membrane in epithelial cells. Involved in regulation of MAPK and Akt signaling pathways. The protein is Prominin-1-A (prom1a) of Danio rerio (Zebrafish).